Reading from the N-terminus, the 469-residue chain is Uronate isomerase (469 aa).

It belongs to the metallo-dependent hydrolases superfamily. Uronate isomerase family.

It carries out the reaction D-glucuronate = D-fructuronate. The catalysed reaction is aldehydo-D-galacturonate = keto-D-tagaturonate. It participates in carbohydrate metabolism; pentose and glucuronate interconversion. In Yersinia enterocolitica serotype O:8 / biotype 1B (strain NCTC 13174 / 8081), this protein is Uronate isomerase.